A 157-amino-acid chain; its full sequence is Crossover junction endodeoxyribonuclease RuvC (157 aa).

Residues Asp-9, Glu-70, and Asp-142 contribute to the active site. Mg(2+) contacts are provided by Asp-9, Glu-70, and Asp-142.

Belongs to the RuvC family. In terms of assembly, homodimer which binds Holliday junction (HJ) DNA. The HJ becomes 2-fold symmetrical on binding to RuvC with unstacked arms; it has a different conformation from HJ DNA in complex with RuvA. In the full resolvosome a probable DNA-RuvA(4)-RuvB(12)-RuvC(2) complex forms which resolves the HJ. It depends on Mg(2+) as a cofactor.

It is found in the cytoplasm. It catalyses the reaction Endonucleolytic cleavage at a junction such as a reciprocal single-stranded crossover between two homologous DNA duplexes (Holliday junction).. In terms of biological role, the RuvA-RuvB-RuvC complex processes Holliday junction (HJ) DNA during genetic recombination and DNA repair. Endonuclease that resolves HJ intermediates. Cleaves cruciform DNA by making single-stranded nicks across the HJ at symmetrical positions within the homologous arms, yielding a 5'-phosphate and a 3'-hydroxyl group; requires a central core of homology in the junction. The consensus cleavage sequence is 5'-(A/T)TT(C/G)-3'. Cleavage occurs on the 3'-side of the TT dinucleotide at the point of strand exchange. HJ branch migration catalyzed by RuvA-RuvB allows RuvC to scan DNA until it finds its consensus sequence, where it cleaves and resolves the cruciform DNA. The sequence is that of Crossover junction endodeoxyribonuclease RuvC from Cyanothece sp. (strain PCC 7425 / ATCC 29141).